The following is a 173-amino-acid chain: NADH-ubiquinone oxidoreductase chain 6 (173 aa).

5 helical membrane passes run 1-21 (MTYL…AVAS), 24-44 (APYF…GVLV), 53-73 (LVLF…SAAL), 86-106 (SVVG…GVFW), and 139-159 (YGGG…FVVL).

The protein belongs to the complex I subunit 6 family.

The protein resides in the mitochondrion membrane. The catalysed reaction is a ubiquinone + NADH + 5 H(+)(in) = a ubiquinol + NAD(+) + 4 H(+)(out). Functionally, core subunit of the mitochondrial membrane respiratory chain NADH dehydrogenase (Complex I) that is believed to belong to the minimal assembly required for catalysis. Complex I functions in the transfer of electrons from NADH to the respiratory chain. The immediate electron acceptor for the enzyme is believed to be ubiquinone. The sequence is that of NADH-ubiquinone oxidoreductase chain 6 (MT-ND6) from Formosania lacustris (Oriental stream loach).